Reading from the N-terminus, the 491-residue chain is Probable Xaa-Pro aminopeptidase AFLA_084750 (491 aa).

Asp271, Asp282, Glu419, and Glu458 together coordinate Mn(2+).

This sequence belongs to the peptidase M24B family. Mn(2+) is required as a cofactor.

The catalysed reaction is Release of any N-terminal amino acid, including proline, that is linked to proline, even from a dipeptide or tripeptide.. Catalyzes the removal of a penultimate prolyl residue from the N-termini of peptides. The polypeptide is Probable Xaa-Pro aminopeptidase AFLA_084750 (Aspergillus flavus (strain ATCC 200026 / FGSC A1120 / IAM 13836 / NRRL 3357 / JCM 12722 / SRRC 167)).